The following is a 582-amino-acid chain: ATP-dependent lipid A-core flippase (582 aa).

Transmembrane regions (helical) follow at residues Leu-15–Ile-35, Tyr-68–Leu-88, Gly-140–Leu-160, Tyr-161–Ile-181, and Val-254–Ile-274. The ABC transmembrane type-1 domain occupies Val-27 to Lys-310. An ABC transporter domain is found at Leu-342–Ile-578. Gly-376–Ser-383 is a binding site for ATP.

It belongs to the ABC transporter superfamily. Lipid exporter (TC 3.A.1.106) family. As to quaternary structure, homodimer.

It localises to the cell inner membrane. The catalysed reaction is ATP + H2O + lipid A-core oligosaccharideSide 1 = ADP + phosphate + lipid A-core oligosaccharideSide 2.. Its function is as follows. Involved in lipopolysaccharide (LPS) biosynthesis. Translocates lipid A-core from the inner to the outer leaflet of the inner membrane. Transmembrane domains (TMD) form a pore in the inner membrane and the ATP-binding domain (NBD) is responsible for energy generation. This chain is ATP-dependent lipid A-core flippase, found in Pasteurella multocida (strain Pm70).